Consider the following 205-residue polypeptide: G-protein coupled receptor (205 aa).

The next 5 membrane-spanning stretches (helical) occupy residues Gly-40 to Tyr-60, Phe-71 to Thr-91, Leu-107 to Ala-127, Ile-151 to Ile-171, and Leu-185 to Trp-205. An intrachain disulfide couples Cys-105 to Cys-181.

This sequence belongs to the G-protein coupled receptor 1 family.

Its subcellular location is the host membrane. In Human herpesvirus 6B (strain Z29) (HHV-6 variant B), this protein is G-protein coupled receptor (U12).